The following is a 193-amino-acid chain: Flagellin B1 (193 aa).

Positions 1-12 are excised as a propeptide; it reads MFEFITDEDERG.

It belongs to the archaeal flagellin family. Glycosylated.

It is found in the archaeal flagellum. In terms of biological role, flagellin is the subunit protein which polymerizes to form the filaments of archaeal flagella. In Halobacterium salinarum (strain ATCC 700922 / JCM 11081 / NRC-1) (Halobacterium halobium), this protein is Flagellin B1 (flaB1).